A 206-amino-acid polypeptide reads, in one-letter code: Small ribosomal subunit protein uS4A (206 aa).

Positions 96–156 (GRLDNVVYRM…EKAKKQSRIG (61 aa)) constitute an S4 RNA-binding domain.

Belongs to the universal ribosomal protein uS4 family. Part of the 30S ribosomal subunit. Contacts protein S5. The interaction surface between S4 and S5 is involved in control of translational fidelity.

Functionally, one of the primary rRNA binding proteins, it binds directly to 16S rRNA where it nucleates assembly of the body of the 30S subunit. Its function is as follows. With S5 and S12 plays an important role in translational accuracy. This chain is Small ribosomal subunit protein uS4A, found in Psychromonas ingrahamii (strain DSM 17664 / CCUG 51855 / 37).